The sequence spans 115 residues: Large ribosomal subunit protein uL18 (115 aa).

Belongs to the universal ribosomal protein uL18 family. Part of the 50S ribosomal subunit; part of the 5S rRNA/L5/L18/L25 subcomplex. Contacts the 5S and 23S rRNAs.

In terms of biological role, this is one of the proteins that bind and probably mediate the attachment of the 5S RNA into the large ribosomal subunit, where it forms part of the central protuberance. This chain is Large ribosomal subunit protein uL18, found in Ruthia magnifica subsp. Calyptogena magnifica.